The sequence spans 311 residues: Aspartate carbamoyltransferase catalytic subunit (311 aa).

Carbamoyl phosphate-binding residues include Arg55 and Thr56. Lys85 provides a ligand contact to L-aspartate. The carbamoyl phosphate site is built by Arg106, His135, and Gln138. Positions 168 and 230 each coordinate L-aspartate. Leu268 and Pro269 together coordinate carbamoyl phosphate.

The protein belongs to the aspartate/ornithine carbamoyltransferase superfamily. ATCase family. As to quaternary structure, heterododecamer (2C3:3R2) of six catalytic PyrB chains organized as two trimers (C3), and six regulatory PyrI chains organized as three dimers (R2).

It catalyses the reaction carbamoyl phosphate + L-aspartate = N-carbamoyl-L-aspartate + phosphate + H(+). It participates in pyrimidine metabolism; UMP biosynthesis via de novo pathway; (S)-dihydroorotate from bicarbonate: step 2/3. In terms of biological role, catalyzes the condensation of carbamoyl phosphate and aspartate to form carbamoyl aspartate and inorganic phosphate, the committed step in the de novo pyrimidine nucleotide biosynthesis pathway. The chain is Aspartate carbamoyltransferase catalytic subunit from Pectobacterium carotovorum subsp. carotovorum (strain PC1).